A 333-amino-acid polypeptide reads, in one-letter code: Thiamine-monophosphate kinase (333 aa).

4 residues coordinate Mg(2+): aspartate 44, serine 58, threonine 59, and aspartate 60. Substrate is bound at residue histidine 67. Positions 89 and 137 each coordinate Mg(2+). ATP contacts are provided by residues glycine 136–aspartate 137 and arginine 162. Aspartate 224 lines the Mg(2+) pocket. Residue serine 226 coordinates ATP. Aspartate 227 contacts Mg(2+). Substrate is bound by residues glutamate 278 and tryptophan 320.

This sequence belongs to the thiamine-monophosphate kinase family.

The catalysed reaction is thiamine phosphate + ATP = thiamine diphosphate + ADP. It functions in the pathway cofactor biosynthesis; thiamine diphosphate biosynthesis; thiamine diphosphate from thiamine phosphate: step 1/1. Its function is as follows. Catalyzes the ATP-dependent phosphorylation of thiamine-monophosphate (TMP) to form thiamine-pyrophosphate (TPP), the active form of vitamin B1. The chain is Thiamine-monophosphate kinase from Mycobacterium tuberculosis (strain CDC 1551 / Oshkosh).